The following is a 434-amino-acid chain: Glycylpeptide N-tetradecanoyltransferase 1 (434 aa).

Positions 1 to 24 (MADNNSPPGSVEQKADQIVEANPL) are disordered. The residue at position 2 (alanine 2) is an N-acetylalanine. Residues 48-51 (HKFW), 184-186 (LCV), and 192-196 (SKRLA) each bind tetradecanoyl-CoA. Leucine 434 serves as the catalytic Proton acceptor; via carboxylate.

It belongs to the NMT family. As to expression, expressed ubiquitously, with higher levels in young tissues (at protein level).

It localises to the cytoplasm. It carries out the reaction N-terminal glycyl-[protein] + tetradecanoyl-CoA = N-tetradecanoylglycyl-[protein] + CoA + H(+). Its function is as follows. Adds a myristoyl group to the N-terminal glycine residue of certain cellular proteins. Can also use decanoyl-CoA and lauroyl-CoA as substrates. This is Glycylpeptide N-tetradecanoyltransferase 1 (NMT1) from Arabidopsis thaliana (Mouse-ear cress).